We begin with the raw amino-acid sequence, 272 residues long: Phosphoribosylformylglycinamidine synthase subunit PurQ (272 aa).

Residues Val8–Glu243 enclose the Glutamine amidotransferase type-1 domain. Cys98 acts as the Nucleophile in catalysis. Catalysis depends on residues His225, Glu227, and Glu235.

As to quaternary structure, part of the FGAM synthase complex composed of 1 PurL, 1 PurQ and 2 PurS subunits.

The protein resides in the cytoplasm. It catalyses the reaction N(2)-formyl-N(1)-(5-phospho-beta-D-ribosyl)glycinamide + L-glutamine + ATP + H2O = 2-formamido-N(1)-(5-O-phospho-beta-D-ribosyl)acetamidine + L-glutamate + ADP + phosphate + H(+). The catalysed reaction is L-glutamine + H2O = L-glutamate + NH4(+). The protein operates within purine metabolism; IMP biosynthesis via de novo pathway; 5-amino-1-(5-phospho-D-ribosyl)imidazole from N(2)-formyl-N(1)-(5-phospho-D-ribosyl)glycinamide: step 1/2. Part of the phosphoribosylformylglycinamidine synthase complex involved in the purines biosynthetic pathway. Catalyzes the ATP-dependent conversion of formylglycinamide ribonucleotide (FGAR) and glutamine to yield formylglycinamidine ribonucleotide (FGAM) and glutamate. The FGAM synthase complex is composed of three subunits. PurQ produces an ammonia molecule by converting glutamine to glutamate. PurL transfers the ammonia molecule to FGAR to form FGAM in an ATP-dependent manner. PurS interacts with PurQ and PurL and is thought to assist in the transfer of the ammonia molecule from PurQ to PurL. The sequence is that of Phosphoribosylformylglycinamidine synthase subunit PurQ from Methanococcus maripaludis (strain C7 / ATCC BAA-1331).